A 524-amino-acid polypeptide reads, in one-letter code: RNA-splicing ligase RtcB homolog 1 (524 aa).

5 residues coordinate Mn(2+): Asp-141, Cys-144, His-249, His-281, and His-372. 248–252 is a binding site for GMP; sequence NHYLE. Residues 372–373, 421–424, Ser-428, 447–450, and Lys-523 contribute to the GMP site; these read HN, GGSM, and HGAG. His-447 serves as the catalytic GMP-histidine intermediate.

The protein belongs to the RtcB family. As to quaternary structure, catalytic component of the tRNA-splicing ligase complex. Requires Mn(2+) as cofactor.

It catalyses the reaction a 3'-end 3'-phospho-ribonucleotide-RNA + a 5'-end dephospho-ribonucleoside-RNA + GTP = a ribonucleotidyl-ribonucleotide-RNA + GMP + diphosphate. The enzyme catalyses a 3'-end 2',3'-cyclophospho-ribonucleotide-RNA + a 5'-end dephospho-ribonucleoside-RNA + GTP + H2O = a ribonucleotidyl-ribonucleotide-RNA + GMP + diphosphate + H(+). In terms of biological role, catalytic subunit of the tRNA-splicing ligase complex that acts by directly joining spliced tRNA halves to mature-sized tRNAs by incorporating the precursor-derived splice junction phosphate into the mature tRNA as a canonical 3',5'-phosphodiester. May act as an RNA ligase with broad substrate specificity, and may function toward other RNAs. This chain is RNA-splicing ligase RtcB homolog 1, found in Entamoeba histolytica (strain ATCC 30459 / HM-1:IMSS / ABRM).